We begin with the raw amino-acid sequence, 336 residues long: Aspartate carbamoyltransferase catalytic subunit (336 aa).

Arginine 72 and threonine 73 together coordinate carbamoyl phosphate. Lysine 100 contacts L-aspartate. 3 residues coordinate carbamoyl phosphate: arginine 122, histidine 152, and glutamine 155. L-aspartate-binding residues include arginine 185 and arginine 240. 2 residues coordinate carbamoyl phosphate: glycine 281 and proline 282.

The protein belongs to the aspartate/ornithine carbamoyltransferase superfamily. ATCase family. As to quaternary structure, heterododecamer (2C3:3R2) of six catalytic PyrB chains organized as two trimers (C3), and six regulatory PyrI chains organized as three dimers (R2).

The catalysed reaction is carbamoyl phosphate + L-aspartate = N-carbamoyl-L-aspartate + phosphate + H(+). Its pathway is pyrimidine metabolism; UMP biosynthesis via de novo pathway; (S)-dihydroorotate from bicarbonate: step 2/3. Its function is as follows. Catalyzes the condensation of carbamoyl phosphate and aspartate to form carbamoyl aspartate and inorganic phosphate, the committed step in the de novo pyrimidine nucleotide biosynthesis pathway. This is Aspartate carbamoyltransferase catalytic subunit from Marinobacter nauticus (strain ATCC 700491 / DSM 11845 / VT8) (Marinobacter aquaeolei).